A 292-amino-acid chain; its full sequence is Shikimate dehydrogenase (NADP(+)) (292 aa).

Shikimate-binding positions include 25–27 (SKS) and T72. K76 serves as the catalytic Proton acceptor. 2 residues coordinate shikimate: N97 and D113. Residues 137 to 141 (GAGGA), 161 to 166 (NRTQSK), and M230 contribute to the NADP(+) site. Y232 serves as a coordination point for shikimate. G254 is an NADP(+) binding site.

This sequence belongs to the shikimate dehydrogenase family. Homodimer.

It carries out the reaction shikimate + NADP(+) = 3-dehydroshikimate + NADPH + H(+). It participates in metabolic intermediate biosynthesis; chorismate biosynthesis; chorismate from D-erythrose 4-phosphate and phosphoenolpyruvate: step 4/7. Functionally, involved in the biosynthesis of the chorismate, which leads to the biosynthesis of aromatic amino acids. Catalyzes the reversible NADPH linked reduction of 3-dehydroshikimate (DHSA) to yield shikimate (SA). The chain is Shikimate dehydrogenase (NADP(+)) from Shewanella sp. (strain MR-7).